The primary structure comprises 124 residues: MDTMGRHVISELWGCDFDKLNDIDFIEKTFVDAALKSGAEIREVAFHKFAPQGVSGVVIISESHLTIHTFPEHGYASIDVYTCGHLDPTIAADYIAEMLGAQTRETIELPRGMRPIEVKKAQAL.

S63 acts as the Schiff-base intermediate with substrate; via pyruvic acid in catalysis. Position 63 is a pyruvic acid (Ser); by autocatalysis (S63). H68 acts as the Proton acceptor; for processing activity in catalysis. C83 (proton donor; for catalytic activity) is an active-site residue.

The protein belongs to the prokaryotic AdoMetDC family. Type 1 subfamily. As to quaternary structure, heterotetramer of two alpha and two beta chains arranged as a dimer of alpha/beta heterodimers. Pyruvate is required as a cofactor. Is synthesized initially as an inactive proenzyme. Formation of the active enzyme involves a self-maturation process in which the active site pyruvoyl group is generated from an internal serine residue via an autocatalytic post-translational modification. Two non-identical subunits are generated from the proenzyme in this reaction, and the pyruvate is formed at the N-terminus of the alpha chain, which is derived from the carboxyl end of the proenzyme. The post-translation cleavage follows an unusual pathway, termed non-hydrolytic serinolysis, in which the side chain hydroxyl group of the serine supplies its oxygen atom to form the C-terminus of the beta chain, while the remainder of the serine residue undergoes an oxidative deamination to produce ammonia and the pyruvoyl group blocking the N-terminus of the alpha chain.

The enzyme catalyses S-adenosyl-L-methionine + H(+) = S-adenosyl 3-(methylsulfanyl)propylamine + CO2. It participates in amine and polyamine biosynthesis; S-adenosylmethioninamine biosynthesis; S-adenosylmethioninamine from S-adenosyl-L-methionine: step 1/1. Its function is as follows. Catalyzes the decarboxylation of S-adenosylmethionine to S-adenosylmethioninamine (dcAdoMet), the propylamine donor required for the synthesis of the polyamines spermine and spermidine from the diamine putrescine. The polypeptide is S-adenosylmethionine decarboxylase proenzyme (Geobacillus kaustophilus (strain HTA426)).